Consider the following 890-residue polypeptide: Tyrosine-protein kinase receptor TYRO3 (890 aa).

The signal sequence occupies residues 1–40 (MALRRSMGRPGLPPLPLPPPPRLGLLLAALASLLLPESAA). 2 consecutive Ig-like C2-type domains span residues 41–128 (AGLK…TEIS) and 139–220 (PFFT…ATVH). The Extracellular segment spans residues 41–429 (AGLKLMGAPV…QGPPHSRTSW (389 aa)). Asparagine 63 is a glycosylation site (N-linked (GlcNAc...) asparagine). 2 cysteine pairs are disulfide-bonded: cysteine 64–cysteine 117 and cysteine 160–cysteine 203. N-linked (GlcNAc...) asparagine glycans are attached at residues asparagine 191, asparagine 230, asparagine 240, asparagine 293, asparagine 366, and asparagine 380. Fibronectin type-III domains are found at residues 227–320 (APFN…TKGL) and 325–416 (APQN…SHDR). Residues 430 to 450 (VPVVLGVLTALVTAAALALIL) form a helical membrane-spanning segment. The Cytoplasmic portion of the chain corresponds to 451 to 890 (LRKRRKETRF…QQGLLPHSSC (440 aa)). Position 466 is a phosphoserine (serine 466). Residues 518–790 (FTLGRMLGKG…CLRMELENIL (273 aa)) form the Protein kinase domain. ATP contacts are provided by residues 524–532 (LGKGEFGSV) and lysine 550. The active-site Proton acceptor is the aspartate 655. A phosphotyrosine; by autocatalysis mark is found at tyrosine 681, tyrosine 685, tyrosine 686, and tyrosine 804. 2 disordered regions span residues 815 to 837 (AGGS…GSGM) and 851 to 871 (LTPG…ESPL). Residues serine 818 and serine 869 each carry the phosphoserine modification.

This sequence belongs to the protein kinase superfamily. Tyr protein kinase family. AXL/UFO subfamily. As to quaternary structure, monomer and homodimer. Interacts (via N-terminus) with extracellular ligands TULP1 and GAS6. Interacts with PIK3R1; this interaction increases PI3-kinase activity. Autophosphorylated. Abundant in the brain and lower levels in other tissues.

Its subcellular location is the cell membrane. The catalysed reaction is L-tyrosyl-[protein] + ATP = O-phospho-L-tyrosyl-[protein] + ADP + H(+). In terms of biological role, receptor tyrosine kinase that transduces signals from the extracellular matrix into the cytoplasm by binding to several ligands including TULP1 or GAS6. Regulates many physiological processes including cell survival, migration and differentiation. Ligand binding at the cell surface induces dimerization and autophosphorylation of TYRO3 on its intracellular domain that provides docking sites for downstream signaling molecules. Following activation by ligand, interacts with PIK3R1 and thereby enhances PI3-kinase activity. Activates the AKT survival pathway, including nuclear translocation of NF-kappa-B and up-regulation of transcription of NF-kappa-B-regulated genes. TYRO3 signaling plays a role in various processes such as neuron protection from excitotoxic injury, platelet aggregation and cytoskeleton reorganization. Also plays an important role in inhibition of Toll-like receptors (TLRs)-mediated innate immune response by activating STAT1, which selectively induces production of suppressors of cytokine signaling SOCS1 and SOCS3. Its function is as follows. (Microbial infection) Acts as a receptor for lassa virus and lymphocytic choriomeningitis virus, possibly through GAS6 binding to phosphatidyl-serine at the surface of virion envelope. (Microbial infection) Acts as a receptor for Ebolavirus, possibly through GAS6 binding to phosphatidyl-serine at the surface of virion envelope. In Homo sapiens (Human), this protein is Tyrosine-protein kinase receptor TYRO3 (TYRO3).